The sequence spans 127 residues: NADPH-dependent 7-cyano-7-deazaguanine reductase (127 aa).

Residue Cys-40 is the Thioimide intermediate of the active site. Asp-47 serves as the catalytic Proton donor. Residues 62–64 (VEL) and 81–82 (HE) contribute to the substrate site.

This sequence belongs to the GTP cyclohydrolase I family. QueF type 1 subfamily.

It is found in the cytoplasm. It catalyses the reaction 7-aminomethyl-7-carbaguanine + 2 NADP(+) = 7-cyano-7-deazaguanine + 2 NADPH + 3 H(+). The protein operates within tRNA modification; tRNA-queuosine biosynthesis. Functionally, catalyzes the NADPH-dependent reduction of 7-cyano-7-deazaguanine (preQ0) to 7-aminomethyl-7-deazaguanine (preQ1). In Campylobacter lari (strain RM2100 / D67 / ATCC BAA-1060), this protein is NADPH-dependent 7-cyano-7-deazaguanine reductase.